Reading from the N-terminus, the 1559-residue chain is Arginine-glutamic acid dipeptide repeats protein (1559 aa).

The span at 1–36 (MTADKDKDKDKEKDRDRDRDRERDKRDKARESENAR) shows a compositional bias: basic and acidic residues. Residues 1-89 (MTADKDKDKD…KKKSRYERTD (89 aa)) are disordered. Ser-53 and Ser-56 each carry phosphoserine. The segment covering 73 to 84 (KSRKKPPKKKSR) has biased composition (basic residues). Positions 102-282 (VVYRPGDCVY…PETRRLNSTQ (181 aa)) constitute a BAH domain. Residue Thr-119 is modified to Phosphothreonine. Ser-141 and Ser-303 each carry phosphoserine. The 104-residue stretch at 283 to 386 (GEIRVGPSHQ…KALQRLVKKP (104 aa)) folds into the ELM2 domain. The SANT domain maps to 390–442 (LIEKCWTEDEVKRFVKGLRQYGKNFFRIRKELLPNKETGELITFYYYWKKTPE). The segment at 463–494 (TRTASTPVNTPSRPPSSEFLDLSSASEDDFDS) is disordered. Residues 464 to 473 (RTASTPVNTP) show a composition bias toward polar residues. Over residues 478–487 (SSEFLDLSSA) the composition is skewed to low complexity. The segment at 507–532 (RHCFTTTSKDWHHGGRENILLCTDCR) adopts a GATA-type zinc-finger fold. The interval 541–1125 (LPPIEKPVDP…PSHASQSARF (585 aa)) is disordered. Lys-559 participates in a covalent cross-link: Glycyl lysine isopeptide (Lys-Gly) (interchain with G-Cter in SUMO2). Residues Ser-593, Ser-599, and Ser-612 each carry the phosphoserine modification. Positions 608–622 (SGRNSPSAASTSSND) are enriched in low complexity. Residues 623–639 (SKAEAVKKSAKKVKEEA) show a composition bias toward basic and acidic residues. Lys-636 is covalently cross-linked (Glycyl lysine isopeptide (Lys-Gly) (interchain with G-Cter in SUMO2)). Residues Ser-641, Ser-655, Ser-674, and Ser-678 each carry the phosphoserine modification. Basic and acidic residues predominate over residues 651–672 (EKVASDTEDTDRATSKKTKTQE). Residues 687–707 (SDSRSVNDEGSSDPKDIDQDN) are compositionally biased toward basic and acidic residues. Polar residues predominate over residues 708–735 (RSTSPSIPSPQDNESDSDSSAQQQMLQT). Positions 736 to 761 (QPPALQAPSGAASAPSTAPPGTTQLP) are enriched in low complexity. The span at 768–791 (SATTVPPQGSPATSQPPNQTQSTV) shows a compositional bias: polar residues. Residues 805 to 822 (LHPPRLPSPHPPLQPMTA) are compositionally biased toward pro residues. Positions 890–900 (QLPASQSALQP) are enriched in low complexity. The span at 901–931 (QQPPREQPLPPAPLAMPHIKPPPTTPIPQLP) shows a compositional bias: pro residues. A compositionally biased stretch (low complexity) spans 961–971 (KPLSSLSTHHP). The segment covering 1027–1053 (PQHPFVPGGPPPITPPSCPPTSTPPAG) has biased composition (pro residues). A compositionally biased stretch (low complexity) spans 1054–1068 (PSSSSQPPCSAAVSS). Ser-1098, Ser-1105, and Ser-1107 each carry phosphoserine. Positions 1098–1109 (SPPPPPRSPSPE) are enriched in pro residues. Thr-1111 is modified (phosphothreonine). Residues 1148 to 1205 (GSKLAKKREEAIEKAKREAEQKAREEREREKEKEKEREREREREREAERAAQKASSSA) adopt a coiled-coil conformation. N6-acetyllysine is present on Lys-1150. Positions 1154-1198 (KREEAIEKAKREAEQKAREEREREKEKEKEREREREREREAERAA) are enriched in basic and acidic residues. Residues 1154–1239 (KREEAIEKAK…TTIAAVPPYI (86 aa)) are disordered. Tyr-1252 bears the Phosphotyrosine mark. Ser-1259 carries the post-translational modification Phosphoserine.

In terms of assembly, interacts with HDAC1 and ATN1. Interaction with ATN1 is improved when the poly-Gln region of ATN1 is extended. In terms of tissue distribution, widely expressed.

The protein localises to the nucleus. Its subcellular location is the PML body. Plays a role as a transcriptional repressor during development. May play a role in the control of cell survival. Interacts with FAT1. This chain is Arginine-glutamic acid dipeptide repeats protein (Rere), found in Rattus norvegicus (Rat).